The primary structure comprises 378 residues: Beta sliding clamp (378 aa).

It belongs to the beta sliding clamp family. Forms a ring-shaped head-to-tail homodimer around DNA which binds and tethers DNA polymerases and other proteins to the DNA. The DNA replisome complex has a single clamp-loading complex (3 tau and 1 each of delta, delta', psi and chi subunits) which binds 3 Pol III cores (1 core on the leading strand and 2 on the lagging strand) each with a beta sliding clamp dimer. Additional proteins in the replisome are other copies of gamma, psi and chi, Ssb, DNA helicase and RNA primase. Interacts with YabA, and via YabA, with DnaA. During sporulation probably interacts with SirA.

It localises to the cytoplasm. The protein localises to the nucleoid. Its function is as follows. Confers DNA tethering and processivity to DNA polymerases and other proteins. Acts as a clamp, forming a ring around DNA (a reaction catalyzed by the clamp-loading complex) which diffuses in an ATP-independent manner freely and bidirectionally along dsDNA. Initially characterized for its ability to contact the catalytic subunit of DNA polymerase III (Pol III), a complex, multichain enzyme responsible for most of the replicative synthesis in bacteria; Pol III exhibits 3'-5' exonuclease proofreading activity. The beta chain is required for initiation of replication as well as for processivity of DNA replication. Overexpression in vivo stimulates inititation of DNA replication from oriC. Increased levels of DnaN remove YabA from its association with DnaA on the chromosome, allowing DnaA to bind to its targets. Its interaction with DnaA probably serves as a sink to prevent excessive replication initiation. The protein is Beta sliding clamp of Bacillus subtilis (strain 168).